The sequence spans 942 residues: Leucine--tRNA ligase 2 (942 aa).

The 'HIGH' region signature appears at 35–45 (PYPNSPFHLGH). The 'KMSKS' region motif lies at 619–623 (KMSKS). Lysine 622 serves as a coordination point for ATP.

This sequence belongs to the class-I aminoacyl-tRNA synthetase family.

The protein localises to the cytoplasm. It carries out the reaction tRNA(Leu) + L-leucine + ATP = L-leucyl-tRNA(Leu) + AMP + diphosphate. In Sulfolobus acidocaldarius (strain ATCC 33909 / DSM 639 / JCM 8929 / NBRC 15157 / NCIMB 11770), this protein is Leucine--tRNA ligase 2.